A 119-amino-acid chain; its full sequence is uncharacterized protein (119 aa).

The interval 67 to 119 is disordered; it reads LGLKEVQKKSNEGLNEVQGVADINKQKRPANSQDSSSVEGDIQNFLEKVTGKN. The span at 95-104 shows a compositional bias: polar residues; that stretch reads PANSQDSSSV.

This is an uncharacterized protein from Anabaena variabilis.